The chain runs to 412 residues: Translation initiation factor 2 subunit gamma (412 aa).

Residues 7-203 (QPEVNIGLVG…AIESEIPTPD (197 aa)) form the tr-type G domain. Residues 16-23 (GHVDHGKT) are G1. Mg(2+)-binding residues include aspartate 19, threonine 23, glycine 44, and serine 46. 19–24 (DHGKTT) is a GTP binding site. The interval 44-48 (GISIR) is G2. The tract at residues 90–93 (DAPG) is G3. Residues 146–149 (NKVD) and 181–183 (SAQ) contribute to the GTP site. The G4 stretch occupies residues 146 to 149 (NKVD). The segment at 181–183 (SAQ) is G5.

This sequence belongs to the TRAFAC class translation factor GTPase superfamily. Classic translation factor GTPase family. EIF2G subfamily. As to quaternary structure, heterotrimer composed of an alpha, a beta and a gamma chain. Mg(2+) serves as cofactor.

The catalysed reaction is GTP + H2O = GDP + phosphate + H(+). EIF-2 functions in the early steps of protein synthesis by forming a ternary complex with GTP and initiator tRNA. The chain is Translation initiation factor 2 subunit gamma from Halorubrum lacusprofundi (strain ATCC 49239 / DSM 5036 / JCM 8891 / ACAM 34).